The primary structure comprises 149 residues: UPF0756 membrane protein BBR47_12340 (149 aa).

4 helical membrane passes run 6–26 (IILL…LVYA), 48–68 (PMFH…IAKG), 86–106 (IAIL…SILP), and 120–140 (LLAV…AGCI).

The protein belongs to the UPF0756 family.

The protein resides in the cell membrane. The protein is UPF0756 membrane protein BBR47_12340 of Brevibacillus brevis (strain 47 / JCM 6285 / NBRC 100599).